The primary structure comprises 720 residues: Zinc finger protein 408 (720 aa).

Residues 201 to 350 are disordered; sequence VQQEVASPGE…GPAGSSPKQG (150 aa). Residues 275 to 285 show a composition bias toward polar residues; sequence LQSNSATQQDP. Residues 287–296 are compositionally biased toward low complexity; it reads GSGASFSSSA. Thr322 bears the Phosphothreonine mark. 10 C2H2-type zinc fingers span residues 353–375, 381–403, 409–431, 437–459, 468–490, 496–518, 524–546, 551–573, 579–601, and 607–629; these read YRCG…AFVH, FLCT…MLGH, FPCP…QVVH, FACD…RKTH, CPCP…MRLH, FLCP…LRLH, YRCP…LISH, HLCP…ERLH, FPCP…LKSH, and YRCP…QLSH.

As to expression, highest expression is observed in adult retina; abundantly expressed in the fetal eye. In the retina, it is detected in the outer nuclear layer, especially cone and rod photoreceptor cells, ganglion cell layer and both outer and inner plexiform layers (at protein level). Expressed in retinal blood vessels (at protein level).

The protein resides in the nucleus. In terms of biological role, may be involved in transcriptional regulation. The protein is Zinc finger protein 408 (ZNF408) of Homo sapiens (Human).